A 316-amino-acid chain; its full sequence is Tetrahydromethanopterin S-methyltransferase subunit H (316 aa).

Belongs to the MtrH family. As to quaternary structure, the complex is composed of 8 subunits; MtrA, MtrB, MtrC, MtrD, MtrE, MtrF, MtrG and MtrH.

The enzyme catalyses 5-methyl-5,6,7,8-tetrahydromethanopterin + coenzyme M + 2 Na(+)(in) = 5,6,7,8-tetrahydromethanopterin + methyl-coenzyme M + 2 Na(+)(out). It participates in one-carbon metabolism; methanogenesis from CO(2); methyl-coenzyme M from 5,10-methylene-5,6,7,8-tetrahydromethanopterin: step 2/2. Part of a complex that catalyzes the formation of methyl-coenzyme M and tetrahydromethanopterin from coenzyme M and methyl-tetrahydromethanopterin. This is an energy-conserving, sodium-ion translocating step. MtrH catalyzes the transfer of the methyl group from methyl-tetrahydromethanopterin to the corrinoid prosthetic group of MtrA. The polypeptide is Tetrahydromethanopterin S-methyltransferase subunit H (Methanosarcina barkeri (strain Fusaro / DSM 804)).